Consider the following 145-residue polypeptide: Large ribosomal subunit protein bL19 (145 aa).

Basic and acidic residues predominate over residues Gly-112 to Ser-130. The tract at residues Gly-112–Lys-145 is disordered.

It belongs to the bacterial ribosomal protein bL19 family.

Its function is as follows. This protein is located at the 30S-50S ribosomal subunit interface and may play a role in the structure and function of the aminoacyl-tRNA binding site. The sequence is that of Large ribosomal subunit protein bL19 from Malacoplasma penetrans (strain HF-2) (Mycoplasma penetrans).